Consider the following 192-residue polypeptide: FAD-linked sulfhydryl oxidase erv2 (192 aa).

Residues 1-8 (MILNRRIQ) lie on the Cytoplasmic side of the membrane. Residues 9-29 (VILPTLLILSFIIWIFHSVMV) form a helical; Signal-anchor membrane-spanning segment. The Lumenal segment spans residues 30 to 192 (DKDWRLFMPE…VINEDHDYSG (163 aa)). Residues 61–162 (HDNNTNNLMV…TSCDGFNERY (102 aa)) enclose the ERV/ALR sulfhydryl oxidase domain. FAD-binding residues include Trp-74, Cys-138, His-141, Asn-145, and Tyr-162. Cys-138 and Cys-155 form a disulfide bridge.

Requires FAD as cofactor.

The protein resides in the endoplasmic reticulum membrane. It is found in the cytoplasm. It localises to the nucleus. It catalyses the reaction 2 R'C(R)SH + O2 = R'C(R)S-S(R)CR' + H2O2. Functionally, FAD-dependent sulfhydryl oxidase that catalyzes disulfide bond formation in the endoplasmic reticulum lumen. The chain is FAD-linked sulfhydryl oxidase erv2 (erv2) from Schizosaccharomyces pombe (strain 972 / ATCC 24843) (Fission yeast).